The sequence spans 121 residues: Ribonuclease P protein component (121 aa).

It belongs to the RnpA family. In terms of assembly, consists of a catalytic RNA component (M1 or rnpB) and a protein subunit.

The enzyme catalyses Endonucleolytic cleavage of RNA, removing 5'-extranucleotides from tRNA precursor.. Its function is as follows. RNaseP catalyzes the removal of the 5'-leader sequence from pre-tRNA to produce the mature 5'-terminus. It can also cleave other RNA substrates such as 4.5S RNA. The protein component plays an auxiliary but essential role in vivo by binding to the 5'-leader sequence and broadening the substrate specificity of the ribozyme. This Neisseria meningitidis serogroup B (strain ATCC BAA-335 / MC58) protein is Ribonuclease P protein component.